Here is a 368-residue protein sequence, read N- to C-terminus: 3-dehydroquinate synthase (368 aa).

NAD(+)-binding positions include 76-81 (DGEQYK), 110-114 (GVIGD), 134-135 (TT), lysine 147, lysine 156, and 174-177 (CLKT). Residues glutamate 189, histidine 252, and histidine 269 each coordinate Zn(2+).

This sequence belongs to the sugar phosphate cyclases superfamily. Dehydroquinate synthase family. Requires NAD(+) as cofactor. Co(2+) is required as a cofactor. The cofactor is Zn(2+).

The protein resides in the cytoplasm. The catalysed reaction is 7-phospho-2-dehydro-3-deoxy-D-arabino-heptonate = 3-dehydroquinate + phosphate. It participates in metabolic intermediate biosynthesis; chorismate biosynthesis; chorismate from D-erythrose 4-phosphate and phosphoenolpyruvate: step 2/7. Its function is as follows. Catalyzes the conversion of 3-deoxy-D-arabino-heptulosonate 7-phosphate (DAHP) to dehydroquinate (DHQ). The sequence is that of 3-dehydroquinate synthase from Vibrio vulnificus (strain YJ016).